The sequence spans 115 residues: Photosystem II reaction center Psb28 protein (115 aa).

The protein belongs to the Psb28 family. As to quaternary structure, part of the photosystem II complex.

The protein localises to the plastid. The protein resides in the chloroplast thylakoid membrane. This Trieres chinensis (Marine centric diatom) protein is Photosystem II reaction center Psb28 protein.